Consider the following 318-residue polypeptide: Methionyl-tRNA formyltransferase (318 aa).

112 to 115 (SILP) lines the (6S)-5,6,7,8-tetrahydrofolate pocket.

The protein belongs to the Fmt family.

It carries out the reaction L-methionyl-tRNA(fMet) + (6R)-10-formyltetrahydrofolate = N-formyl-L-methionyl-tRNA(fMet) + (6S)-5,6,7,8-tetrahydrofolate + H(+). Attaches a formyl group to the free amino group of methionyl-tRNA(fMet). The formyl group appears to play a dual role in the initiator identity of N-formylmethionyl-tRNA by promoting its recognition by IF2 and preventing the misappropriation of this tRNA by the elongation apparatus. The sequence is that of Methionyl-tRNA formyltransferase from Shewanella putrefaciens (strain CN-32 / ATCC BAA-453).